Consider the following 162-residue polypeptide: Large ribosomal subunit protein uL10 (162 aa).

This sequence belongs to the universal ribosomal protein uL10 family. As to quaternary structure, part of the ribosomal stalk of the 50S ribosomal subunit. The N-terminus interacts with L11 and the large rRNA to form the base of the stalk. The C-terminus forms an elongated spine to which L12 dimers bind in a sequential fashion forming a multimeric L10(L12)X complex.

In terms of biological role, forms part of the ribosomal stalk, playing a central role in the interaction of the ribosome with GTP-bound translation factors. This Phytoplasma mali (strain AT) protein is Large ribosomal subunit protein uL10.